Reading from the N-terminus, the 726-residue chain is DNA ligase (726 aa).

Residues 34–38 (DAEYD), 83–84 (SL), and E115 contribute to the NAD(+) site. Catalysis depends on K117, which acts as the N6-AMP-lysine intermediate. Residues R138, E190, K306, and K330 each contribute to the NAD(+) site. Residues C424, C427, C442, and C448 each contribute to the Zn(2+) site. Positions 608-698 (SRGNALAGKT…RTADDQATPA (91 aa)) constitute a BRCT domain. The interval 690-726 (TADDQATPASDRRAATASVPPSDDAPGSPRQLDFDLT) is disordered.

It belongs to the NAD-dependent DNA ligase family. LigA subfamily. Mg(2+) is required as a cofactor. It depends on Mn(2+) as a cofactor.

It catalyses the reaction NAD(+) + (deoxyribonucleotide)n-3'-hydroxyl + 5'-phospho-(deoxyribonucleotide)m = (deoxyribonucleotide)n+m + AMP + beta-nicotinamide D-nucleotide.. Functionally, DNA ligase that catalyzes the formation of phosphodiester linkages between 5'-phosphoryl and 3'-hydroxyl groups in double-stranded DNA using NAD as a coenzyme and as the energy source for the reaction. It is essential for DNA replication and repair of damaged DNA. This is DNA ligase from Roseiflexus sp. (strain RS-1).